Reading from the N-terminus, the 524-residue chain is Thermosome subunit 3 (524 aa).

This sequence belongs to the TCP-1 chaperonin family. As to quaternary structure, the thermosome or CCT complex is a oligomeric complex of two octameric double-ring structures; the complex is probably a heterooligomer of CCT1, CCT2 and CCT3 with yet unknown stoichiometry.

Its function is as follows. Molecular chaperone that assists in the folding or refolding of nascent or denatured proteins along with ATP hydrolysis. ATPase activity is highest in thermosome assemblies containing CCT1:CCT2, followed by assemblies containing CCT1:CCT2:CCT3. Not required for thermosome ATPase activity. Not required for growth. The sequence is that of Thermosome subunit 3 (cct3) from Haloferax volcanii (strain ATCC 29605 / DSM 3757 / JCM 8879 / NBRC 14742 / NCIMB 2012 / VKM B-1768 / DS2) (Halobacterium volcanii).